Here is a 689-residue protein sequence, read N- to C-terminus: FACT complex subunit ssrp1-B (689 aa).

Disordered stretches follow at residues 434 to 565 (DNKS…KRAT) and 592 to 689 (KAGA…GESD). A compositionally biased stretch (acidic residues) spans 461–477 (EQDDDSDDESTDEDYDL). Composition is skewed to basic and acidic residues over residues 478–491 (DKDM…KDSS), 523–532 (IEPKKKESKE), 538–563 (EKKE…EPKR), and 601–628 (SADD…EYKK). The HMG box DNA-binding region spans 561 to 627 (PKRATTAYII…RYEAEMKEYK (67 aa)). Residues 638-650 (GPSTKKSSDQSPG) are compositionally biased toward polar residues.

Belongs to the SSRP1 family. As to quaternary structure, component of the FACT complex, a stable heterodimer of hmg-3 and spt-16. The FACT complex may also include hmg-4 instead of hmg-3. Expressed in the germline.

The protein resides in the nucleus. The protein localises to the chromosome. Component of the FACT complex, a general chromatin factor that acts to reorganize nucleosomes. The FACT complex is involved in multiple processes that require DNA as a template such as mRNA elongation, DNA replication and DNA repair. During transcription elongation the FACT complex acts as a histone chaperone that both destabilizes and restores nucleosomal structure. It facilitates the passage of RNA polymerase II and transcription by promoting the dissociation of one histone H2A-H2B dimer from the nucleosome, then subsequently promotes the reestablishment of the nucleosome following the passage of RNA polymerase II. Binds specifically to double-stranded DNA. In embryos, may function redundantly with hmg-4 to promote cell cycle progression and development of the anterior pharynx. In the germline, acts non-redundantly with hmg-4 to play a role in oocyte development. This is FACT complex subunit ssrp1-B from Caenorhabditis elegans.